The following is a 415-amino-acid chain: 26S proteasome regulatory subunit 6B (415 aa).

An ATP-binding site is contributed by 203–210; sequence GPPGCGKT.

The protein belongs to the AAA ATPase family.

The protein resides in the cytoplasm. It localises to the nucleus. In terms of biological role, the 26S proteasome is involved in the ATP-dependent degradation of ubiquitinated proteins. The regulatory (or ATPase) complex confers ATP dependency and substrate specificity to the 26S complex. The chain is 26S proteasome regulatory subunit 6B from Manduca sexta (Tobacco hawkmoth).